A 285-amino-acid chain; its full sequence is Kanamycin B dioxygenase (285 aa).

It belongs to the PhyH family. Requires Fe cation as cofactor.

It carries out the reaction kanamycin B + 2-oxoglutarate + O2 = 2'-dehydrokanamycin A + succinate + NH4(+) + CO2. The protein operates within antibiotic biosynthesis; kanamycin biosynthesis. Its function is as follows. Mediates the conversion of kanamycin B into 2'-dehydrokanamycin A during the transformation of kanamycin B to kanamycin A. In Streptomyces kanamyceticus, this protein is Kanamycin B dioxygenase (kanJ).